The sequence spans 620 residues: MGKVIGIDLGTTNSAMAVYEGNEAKIIANKEGKNTTPSIVAFTDKGEILVGESAKRQAVTNPEKTIYSIKRIMGLMFNEEKAKEAEKRLPYKIVDRNGACAIEISGKVYTPQEISAKILMKLKEDAESYLGESVTEAVITVPAYFNDSQRKATKEAGTIAGLNVLRIINEPTSAALAYGLDKKESEKIMVYDLGGGTFDVTVLETGDNVVEVLATGGDAFLGGDDFDNRVIDFLATEFKNETGIEIKNDVMALQRLKEAAENAKKELSSAMETEINLPFITADATGPKHLVKKLTRAKFESLTEDLIEETISKIEGVIKDAGLTKNEISEVVMVGGSTRIPKVQERVKGFINKELNKSVNPDEVVAVGASIQGGVLKGDVKDVLLLDVTPLSLGIETLGGVMTKVIDRGTTIPAKKSQVFSTAEDNQPAVSIMVLQGERDLARDNKSLGKFDLQGIAPAPRGVPQIEVTFDIDANGILTVSAQDKNTGKSQEIKISGSSGLSDSEIEKMVKDAELHKEEDARKKEVIEARNHADSLAHQTQKSLDEHKANLNENDANEIQNAINALKDCIKNDNATKAELEDKTKALVQAAQKLGEAMANKNNAEQPKKKDDDVIDAEVE.

At Thr-197 the chain carries Phosphothreonine; by autocatalysis. Residues 597 to 620 are disordered; the sequence is AMANKNNAEQPKKKDDDVIDAEVE.

It belongs to the heat shock protein 70 family.

In terms of biological role, acts as a chaperone. The chain is Chaperone protein DnaK from Helicobacter acinonychis (strain Sheeba).